Here is a 455-residue protein sequence, read N- to C-terminus: tRNA modification GTPase MnmE (455 aa).

(6S)-5-formyl-5,6,7,8-tetrahydrofolate is bound by residues arginine 25, glutamate 85, and arginine 124. Residues glycine 221–phenylalanine 375 enclose the TrmE-type G domain. Asparagine 231 contributes to the K(+) binding site. GTP contacts are provided by residues asparagine 231–serine 236, threonine 250–threonine 256, and aspartate 275–glycine 278. Position 235 (serine 235) interacts with Mg(2+). K(+)-binding residues include threonine 250, isoleucine 252, and threonine 255. Threonine 256 contacts Mg(2+). Lysine 455 contributes to the (6S)-5-formyl-5,6,7,8-tetrahydrofolate binding site.

It belongs to the TRAFAC class TrmE-Era-EngA-EngB-Septin-like GTPase superfamily. TrmE GTPase family. Homodimer. Heterotetramer of two MnmE and two MnmG subunits. It depends on K(+) as a cofactor.

The protein localises to the cytoplasm. Exhibits a very high intrinsic GTPase hydrolysis rate. Involved in the addition of a carboxymethylaminomethyl (cmnm) group at the wobble position (U34) of certain tRNAs, forming tRNA-cmnm(5)s(2)U34. This Streptococcus mutans serotype c (strain ATCC 700610 / UA159) protein is tRNA modification GTPase MnmE.